The primary structure comprises 104 residues: SOSS complex subunit C (104 aa).

Ala-2 is modified (N-acetylalanine).

It belongs to the SOSS-C family. Component of the SOSS complex, composed of SOSS-B (SOSS-B1/NABP2 or SOSS-B2/NABP1), SOSS-A/INTS3 and SOSS-C/INIP. SOSS complexes containing SOSS-B1/NABP2 are more abundant than complexes containing SOSS-B2/NABP1. Interacts with INTS3; the interaction is direct.

The protein resides in the nucleus. Component of the SOSS complex, a multiprotein complex that functions downstream of the MRN complex to promote DNA repair and G2/M checkpoint. The SOSS complex associates with single-stranded DNA at DNA lesions and influences diverse endpoints in the cellular DNA damage response including cell-cycle checkpoint activation, recombinational repair and maintenance of genomic stability. Required for efficient homologous recombination-dependent repair of double-strand breaks (DSBs) and ATM-dependent signaling pathways. In Bos taurus (Bovine), this protein is SOSS complex subunit C (INIP).